The sequence spans 646 residues: Zinc finger protein 493 (646 aa).

The segment at 26 to 48 (FQCDKYVKVFHKLLNSNRHNTKH) adopts a C2H2-type 1; degenerate zinc-finger fold. C2H2-type zinc fingers lie at residues 54–76 (FKCK…KRIH) and 82–104 (YRCE…RRVH). The C2H2-type 4; degenerate zinc-finger motif lies at 109–131 (SYKYECGKSFNQDSNLTTHKRIH). The segment at 137–159 (YKCEECGTSFYQFSYLTRHKLIH) adopts a C2H2-type 5 zinc-finger fold. The C2H2-type 6; degenerate zinc-finger motif lies at 165–187 (YKCEQYGKTFNQSSTLTGHKIIH). The C2H2-type 7; degenerate zinc finger occupies 193–215 (YKCEECGKAFSIFSTPTKHKIIH). The C2H2-type 8; degenerate zinc-finger motif lies at 221-243 (HRCEEYCKAYKESSHLTTHKRIH). 14 C2H2-type zinc fingers span residues 249–271 (YKCE…KIIH), 277–299 (HRCE…KRIH), 305–327 (YKCE…KIIH), 333–355 (YKCE…RIIH), 361–383 (YKCE…KIIH), 389–411 (YKCE…KMIH), 417–439 (YKCE…KRIH), 445–467 (YKCK…KIIH), 473–495 (YKCE…KKIH), 501–523 (YKCE…KQIH), 529–551 (YKCE…KIIH), 557–579 (YKCE…KIIH), 585–607 (CKCE…KLIH), and 613–635 (YKCE…KIIH).

The protein localises to the nucleus. Functionally, may be involved in transcriptional regulation. This is Zinc finger protein 493 (ZNF493) from Homo sapiens (Human).